The sequence spans 280 residues: Pyrethroid hydrolase (280 aa).

Active-site charge relay system residues include Asp202 and His230. Positions 254–280 are disordered; it reads YRQTATKAGPDRPAGADGGRADRADLP.

The protein belongs to the AB hydrolase superfamily. In terms of assembly, monomer.

It catalyses the reaction (-)-trans-permethrin + H2O = (3-phenoxyphenyl)methanol + (1S,3R)-3-(2,2-dichlorovinyl)-2,2-dimethylcyclopropanecarboxylate + H(+). Its function is as follows. Catalyzes the hydrolysis of pyrethroids pesticides. Catalyzes the hydrolysis of cypermethrin to equimolar amounts of cyano-3-phenoxybenzyl alcohol and 2,2-dimethyl-3-(2,2-dichlorovinyl)-cyclopropanecarboxylic acid. Hydrolyzes cis-permethrin at approximately equal rate to trans-permethrin. The polypeptide is Pyrethroid hydrolase (pytH) (Sphingobium wenxiniae (strain DSM 21828 / CGMCC 1.7748 / JZ-1)).